The sequence spans 246 residues: Proteasome subunit alpha type-5 (246 aa).

The protein belongs to the peptidase T1A family. In terms of assembly, the 26S proteasome consists of a 20S proteasome core and two 19S regulatory subunits. The 20S proteasome core is composed of 28 subunits that are arranged in four stacked rings, resulting in a barrel-shaped structure. The two end rings are each formed by seven alpha subunits, and the two central rings are each formed by seven beta subunits. The catalytic chamber with the active sites is on the inside of the barrel.

The protein resides in the cytoplasm. It is found in the nucleus. Functionally, the proteasome is a multicatalytic proteinase complex which is characterized by its ability to cleave peptides with Arg, Phe, Tyr, Leu, and Glu adjacent to the leaving group at neutral or slightly basic pH. The proteasome has an ATP-dependent proteolytic activity. This is Proteasome subunit alpha type-5 from Trypanosoma brucei brucei.